The chain runs to 69 residues: Putative membrane protein insertion efficiency factor (69 aa).

Belongs to the UPF0161 family.

It localises to the cell inner membrane. Functionally, could be involved in insertion of integral membrane proteins into the membrane. The chain is Putative membrane protein insertion efficiency factor from Azoarcus sp. (strain BH72).